Consider the following 1101-residue polypeptide: Nuclear pore complex protein NUP107 (1101 aa).

This sequence belongs to the nucleoporin Nup84/Nup107 family. In terms of assembly, part of the nuclear pore complex (NPC). The NPC has an eight-fold symmetrical structure comprising a central transport channel and two rings, the cytoplasmic and nuclear rings, to which eight filaments are attached. The cytoplasmic filaments have loose ends, while the nuclear filaments are joined in a distal ring, forming a nuclear basket. NPCs are highly dynamic in configuration and composition, and can be devided in 3 subcomplexes, the NUP62 subcomplex, the NUP107-160 subcomplex and the NUP93 subcomplex, containing approximately 30 different nucleoporin proteins.

It is found in the nucleus envelope. It localises to the nucleus. The protein resides in the nuclear pore complex. The protein is Nuclear pore complex protein NUP107 of Arabidopsis thaliana (Mouse-ear cress).